The chain runs to 382 residues: MSTTLQPLPGGLQVAVQACLFLGAVSRSRRFRALLFPPVLAMSLYMLLYTTTGKDSDDIVTWSLITTSLLQGSDILLINDVADLRLVGQKTPTNELSLWQRIKWAGRLMSAPRAVGFTHESRHVFPPHPPANEPRWTFIKRQSLTTLFYFVVLDLVHTFIVLSPVFQRDGVSLTSVDWPMRFLYTALHAAHLWSYMSFGYSAASVVLVALGVSDSDQWPAIYGDWSNAYTIRRFWGRVWHQVFRRIVSTHGDFVTYRFLALPKGTFFADNVHRYTAFFISGVIHAVGEYGMFRDQWLQKSGALRFFLLQATAILVEQEVGKIFKLQPTPLLRRLGYMWTFLWFVFTLPHWMDPQFRQGMADNYGFPLSVSYGLLKGQWRLVA.

6 consecutive transmembrane segments (helical) span residues 5-25 (LQPL…LGAV), 33-53 (ALLF…TTTG), 59-79 (IVTW…LLIN), 146-166 (TLFY…SPVF), 192-212 (LWSY…ALGV), and 335-355 (GYMW…DPQF).

This sequence belongs to the wax synthase family.

Its subcellular location is the membrane. It carries out the reaction cyathatriol + acetyl-CoA = 11-O-acetylcyathatriol + CoA. The enzyme catalyses cyathin A3 + acetyl-CoA = 11-O-acetylcyathin A3 + CoA. It functions in the pathway secondary metabolite biosynthesis. Functionally, acetyltransferase; part of the gene cluster that mediates the biosynthesis of erinacines, cyathane-xylosides that show unique biological activities, including leishmanicidal activity, stimulating activity for nerve growth-factor synthesis, and agonistic activity toward the kappa opioid receptor. Within the pathway, eriL converts cyathatriol into 11-O-acetyl-cyathatriol. EriL is also able to acetylate cyathin A3 to produce 11-O-acetylcyathin A3. The first step of the erinacines biosynthesis pathway is catalyzed by the geranylgeranyl diphosphate (GGPP) synthase eriE via conversion of farnesyl pyrophosphate and isopentyl pyrophosphate into geranylgeranyl pyrophosphate (GGPP). GGPP is then substrate of the diterpene cyclase eriG for the production of cyatha-3,12-diene. The cytochrome P450 monooxygenase eriI then hydroxylates cyatha-3,12-diene at C-14 of the seven-membered ring to produce erinacol, which is further hydroxylated at C-15 by the cytochrome P450 monooxygenase eriC to yield cyathadiol. The cytochrome P450 monooxygenase eriA then catalyzes C-11 hydroxylation in the presence of the short chain dehydrogenase/reductase (SDR) eriH, which leads to the production of cyathatriol. The acetyltransferase eriL converts cyathatriol into 11-O-acetyl-cyathatriol. The SDR eriH catalyzes further oxidation of 11-O-acetyl-cyathatriol into 1-O-acetylcyathin A3. Finally, the glycosyl transferase eriJ tranfers xylose from UDP-xylose onto C-14 of 11-O-acetyl-cyathatriol to form eracine Q. EriJ is also able to convert 11-O-acetyl-cyathatriol to eracine Q2 by using UDP-D-glucose as cosubstrate, but at a lower rate. The sequence is that of Acetyltransferase eriL from Hericium erinaceus (Lion's mane mushroom).